Here is a 225-residue protein sequence, read N- to C-terminus: UPF0758 protein NMCC_1157 (225 aa).

An MPN domain is found at 102 to 224 (VLSDPDTVAD…VRSFRQLGLM (123 aa)). The Zn(2+) site is built by histidine 173, histidine 175, and aspartate 186. Positions 173–186 (HNHPGGSPEPSQED) match the JAMM motif motif.

The protein belongs to the UPF0758 family.

This is UPF0758 protein NMCC_1157 from Neisseria meningitidis serogroup C (strain 053442).